Here is a 150-residue protein sequence, read N- to C-terminus: D-aminoacyl-tRNA deacylase (150 aa).

Residues 138–139 carry the Gly-cisPro motif, important for rejection of L-amino acids motif; sequence GP.

Belongs to the DTD family. As to quaternary structure, homodimer.

It localises to the cytoplasm. It catalyses the reaction glycyl-tRNA(Ala) + H2O = tRNA(Ala) + glycine + H(+). The catalysed reaction is a D-aminoacyl-tRNA + H2O = a tRNA + a D-alpha-amino acid + H(+). In terms of biological role, an aminoacyl-tRNA editing enzyme that deacylates mischarged D-aminoacyl-tRNAs. Also deacylates mischarged glycyl-tRNA(Ala), protecting cells against glycine mischarging by AlaRS. Acts via tRNA-based rather than protein-based catalysis; rejects L-amino acids rather than detecting D-amino acids in the active site. By recycling D-aminoacyl-tRNA to D-amino acids and free tRNA molecules, this enzyme counteracts the toxicity associated with the formation of D-aminoacyl-tRNA entities in vivo and helps enforce protein L-homochirality. The polypeptide is D-aminoacyl-tRNA deacylase (Chlorobium limicola (strain DSM 245 / NBRC 103803 / 6330)).